A 415-amino-acid chain; its full sequence is Glutamyl-tRNA reductase (415 aa).

Substrate is bound by residues 49–52 (TCNR), Ser104, 109–111 (EPQ), and Gln115. The active-site Nucleophile is Cys50. Position 184-189 (184-189 (GAGEMI)) interacts with NADP(+).

The protein belongs to the glutamyl-tRNA reductase family. In terms of assembly, homodimer.

It carries out the reaction (S)-4-amino-5-oxopentanoate + tRNA(Glu) + NADP(+) = L-glutamyl-tRNA(Glu) + NADPH + H(+). It participates in porphyrin-containing compound metabolism; protoporphyrin-IX biosynthesis; 5-aminolevulinate from L-glutamyl-tRNA(Glu): step 1/2. Catalyzes the NADPH-dependent reduction of glutamyl-tRNA(Glu) to glutamate 1-semialdehyde (GSA). This is Glutamyl-tRNA reductase from Neisseria meningitidis serogroup B (strain ATCC BAA-335 / MC58).